The chain runs to 121 residues: Replication protein A 14 kDa subunit (121 aa).

An N-acetylvaline modification is found at Val-2. Residues Lys-23, Lys-39, and Lys-88 each participate in a glycyl lysine isopeptide (Lys-Gly) (interchain with G-Cter in ubiquitin) cross-link.

This sequence belongs to the replication factor A protein 3 family. As to quaternary structure, component of the canonical replication protein A complex (RPA), a heterotrimer composed of RPA1, RPA2 and RPA3. Also a component of the aRPA, the alternative replication protein A complex, a trimeric complex similar to the replication protein A complex/RPA but where RPA1 and RPA3 are associated with RPA4 instead of RPA2. Interacts with BRIP1/FANCJ via the RPA1 subunit; following DNA damage they colocalize in foci in the nucleus. Ubiquitinated by RFWD3 at stalled replication forks in response to DNA damage: ubiquitination by RFWD3 does not lead to degradation by the proteasome and promotes removal of the RPA complex from stalled replication forks, promoting homologous recombination.

The protein resides in the nucleus. Its function is as follows. As part of the heterotrimeric replication protein A complex (RPA/RP-A), binds and stabilizes single-stranded DNA intermediates that form during DNA replication or upon DNA stress. It prevents their reannealing and in parallel, recruits and activates different proteins and complexes involved in DNA metabolism. Thereby, it plays an essential role both in DNA replication and the cellular response to DNA damage. In the cellular response to DNA damage, the RPA complex controls DNA repair and DNA damage checkpoint activation. Through recruitment of ATRIP activates the ATR kinase a master regulator of the DNA damage response. It is required for the recruitment of the DNA double-strand break repair factors RAD51 and RAD52 to chromatin, in response to DNA damage. Also recruits to sites of DNA damage proteins like XPA and XPG that are involved in nucleotide excision repair and is required for this mechanism of DNA repair. Also plays a role in base excision repair (BER), probably through interaction with UNG. RPA stimulates 5'-3' helicase activity of BRIP1/FANCJ. Also recruits SMARCAL1/HARP, which is involved in replication fork restart, to sites of DNA damage. May also play a role in telomere maintenance. RPA3 has its own single-stranded DNA-binding activity and may be responsible for polarity of the binding of the complex to DNA. As part of the alternative replication protein A complex, aRPA, binds single-stranded DNA and probably plays a role in DNA repair. Compared to the RPA2-containing, canonical RPA complex, may not support chromosomal DNA replication and cell cycle progression through S-phase. The aRPA may not promote efficient priming by DNA polymerase alpha but could support DNA synthesis by polymerase delta in presence of PCNA and replication factor C (RFC), the dual incision/excision reaction of nucleotide excision repair and RAD51-dependent strand exchange. The sequence is that of Replication protein A 14 kDa subunit (RPA3) from Homo sapiens (Human).